Reading from the N-terminus, the 166-residue chain is Regulatory protein RecX (166 aa).

This sequence belongs to the RecX family.

It localises to the cytoplasm. In terms of biological role, modulates RecA activity. In Klebsiella pneumoniae subsp. pneumoniae (strain ATCC 700721 / MGH 78578), this protein is Regulatory protein RecX.